The primary structure comprises 379 residues: Transcription factor bHLH122 (379 aa).

Positions 1–17 are enriched in basic and acidic residues; it reads MESEFQQHHFLLHDHQH. A disordered region spans residues 1 to 21; that stretch reads MESEFQQHHFLLHDHQHQRPR. S74 bears the Phosphoserine mark. Disordered regions lie at residues 79–98, 133–156, and 190–286; these read TFNS…EDED, SVSR…ARHN, and TSNT…MSLP. A compositionally biased stretch (basic and acidic residues) spans 84 to 93; sequence GTEKKPPEVK. Residues 190–200 show a composition bias toward polar residues; the sequence is TSNTEASSLTP. A phosphoserine mark is found at S213 and S234. Residues 235–261 show a composition bias toward polar residues; sequence GGFNRSFGNEGSASSKLTALARTQSGG. Basic and acidic residues predominate over residues 265–274; that stretch reads YKTKDEDSAS. The bHLH domain occupies 310–360; that stretch reads CATHPRSIAERVRRTKISERMRKLQDLVPNMDTQTNTADMLDLAVQYIKDL.

In terms of assembly, homodimer.

Its subcellular location is the nucleus. This chain is Transcription factor bHLH122 (BHLH122), found in Arabidopsis thaliana (Mouse-ear cress).